A 98-amino-acid polypeptide reads, in one-letter code: Toxin ParE1 (98 aa).

Belongs to the RelE toxin family.

Its function is as follows. Toxic component of a type II toxin-antitoxin (TA) system. Its toxic effect is neutralized by coexpression with cognate antitoxin ParD1. The polypeptide is Toxin ParE1 (parE1) (Mycobacterium tuberculosis (strain CDC 1551 / Oshkosh)).